The following is a 338-amino-acid chain: tRNA N6-adenosine threonylcarbamoyltransferase (338 aa).

Fe cation contacts are provided by His-111 and His-115. Substrate contacts are provided by residues 134 to 138, Asp-167, Gly-180, and Asn-272; that span reads LVSGG. Asp-300 lines the Fe cation pocket.

It belongs to the KAE1 / TsaD family. The cofactor is Fe(2+).

The protein resides in the cytoplasm. It carries out the reaction L-threonylcarbamoyladenylate + adenosine(37) in tRNA = N(6)-L-threonylcarbamoyladenosine(37) in tRNA + AMP + H(+). Functionally, required for the formation of a threonylcarbamoyl group on adenosine at position 37 (t(6)A37) in tRNAs that read codons beginning with adenine. Is involved in the transfer of the threonylcarbamoyl moiety of threonylcarbamoyl-AMP (TC-AMP) to the N6 group of A37, together with TsaE and TsaB. TsaD likely plays a direct catalytic role in this reaction. In Shewanella putrefaciens (strain CN-32 / ATCC BAA-453), this protein is tRNA N6-adenosine threonylcarbamoyltransferase.